Reading from the N-terminus, the 424-residue chain is Glutamate-1-semialdehyde 2,1-aminomutase (424 aa).

An N6-(pyridoxal phosphate)lysine modification is found at lysine 263.

This sequence belongs to the class-III pyridoxal-phosphate-dependent aminotransferase family. HemL subfamily. As to quaternary structure, homodimer. Requires pyridoxal 5'-phosphate as cofactor.

Its subcellular location is the cytoplasm. The catalysed reaction is (S)-4-amino-5-oxopentanoate = 5-aminolevulinate. Its pathway is porphyrin-containing compound metabolism; protoporphyrin-IX biosynthesis; 5-aminolevulinate from L-glutamyl-tRNA(Glu): step 2/2. In Campylobacter jejuni subsp. jejuni serotype O:23/36 (strain 81-176), this protein is Glutamate-1-semialdehyde 2,1-aminomutase.